Reading from the N-terminus, the 122-residue chain is Co-chaperonin GroES (122 aa).

The protein belongs to the GroES chaperonin family. As to quaternary structure, heptamer of 7 subunits arranged in a ring. Interacts with the chaperonin GroEL.

Its subcellular location is the cytoplasm. Its function is as follows. Together with the chaperonin GroEL, plays an essential role in assisting protein folding. The GroEL-GroES system forms a nano-cage that allows encapsulation of the non-native substrate proteins and provides a physical environment optimized to promote and accelerate protein folding. GroES binds to the apical surface of the GroEL ring, thereby capping the opening of the GroEL channel. The polypeptide is Co-chaperonin GroES (Aquifex aeolicus (strain VF5)).